The primary structure comprises 203 residues: Glycerol-3-phosphate acyltransferase (203 aa).

A run of 6 helical transmembrane segments spans residues 3–23, 51–71, 74–94, 116–136, 140–160, and 164–178; these read ILLATVAAYLIGSVSFAVVVS, KAAILTLVGDAFKGWLAVWLV, FGIGGEIGVALAAIAVFLGHL, AVHPVLGLATALTWLIVAFFF, SLAALVAAVFAPIFDVFLFGT, and PVAWAVLAMSVLLIW.

It belongs to the PlsY family. As to quaternary structure, probably interacts with PlsX.

It localises to the cell inner membrane. It carries out the reaction an acyl phosphate + sn-glycerol 3-phosphate = a 1-acyl-sn-glycero-3-phosphate + phosphate. The protein operates within lipid metabolism; phospholipid metabolism. Functionally, catalyzes the transfer of an acyl group from acyl-phosphate (acyl-PO(4)) to glycerol-3-phosphate (G3P) to form lysophosphatidic acid (LPA). This enzyme utilizes acyl-phosphate as fatty acyl donor, but not acyl-CoA or acyl-ACP. This is Glycerol-3-phosphate acyltransferase from Burkholderia pseudomallei (strain K96243).